Consider the following 226-residue polypeptide: Orotate phosphoribosyltransferase (226 aa).

Residues arginine 107, lysine 108, lysine 111, and 133–141 (EDLTTDGGS) contribute to the 5-phospho-alpha-D-ribose 1-diphosphate site. Threonine 137 contacts orotate.

This sequence belongs to the purine/pyrimidine phosphoribosyltransferase family. PyrE subfamily. In terms of assembly, homodimer. Mg(2+) is required as a cofactor.

It carries out the reaction orotidine 5'-phosphate + diphosphate = orotate + 5-phospho-alpha-D-ribose 1-diphosphate. It functions in the pathway pyrimidine metabolism; UMP biosynthesis via de novo pathway; UMP from orotate: step 1/2. Catalyzes the transfer of a ribosyl phosphate group from 5-phosphoribose 1-diphosphate to orotate, leading to the formation of orotidine monophosphate (OMP). The sequence is that of Orotate phosphoribosyltransferase from Ruegeria sp. (strain TM1040) (Silicibacter sp.).